The following is a 1022-amino-acid chain: Sodium/potassium-transporting ATPase subunit alpha (1022 aa).

Residues Met1–Ala5 constitute a propeptide that is removed on maturation. The interval Met1–Glu34 is disordered. The Cytoplasmic segment spans residues Ala6–Pro87. Residue Ser16 is modified to Phosphoserine; by PKC. The interaction with phosphoinositide-3 kinase stretch occupies residues Pro82 to Pro84. Residues Glu88–Ala108 form a helical membrane-spanning segment. At Ile109–Tyr131 the chain is on the lumenal side. A helical transmembrane segment spans residues Leu132 to Ala152. The Cytoplasmic portion of the chain corresponds to Lys153–Ile288. The segment at Asn215 to Asn235 is disordered. The helical transmembrane segment at Glu289 to Ile308 threads the bilayer. Residues Leu309–Ala320 lie on the Lumenal side of the membrane. A helical membrane pass occupies residues Val321–Ala338. The Cytoplasmic segment spans residues Thr339–Leu771. The 4-aspartylphosphate intermediate role is filled by Asp376. Mg(2+) contacts are provided by Asp716 and Asp720. Residues Lys772–Val791 traverse the membrane as a helical segment. Residues Phe792–Leu801 are Lumenal-facing. A helical transmembrane segment spans residues Gly802–Ala822. At Tyr823–Lys842 the chain is on the cytoplasmic side. A helical transmembrane segment spans residues Leu843–Phe865. Residues Phe866–Cys917 are Lumenal-facing. Residues His918 to Lys937 form a helical membrane-spanning segment. Over Thr938 to Asn950 the chain is Cytoplasmic. Ser942 is subject to Phosphoserine; by PKA. The chain crosses the membrane as a helical span at residues Lys951–Tyr969. Residues Thr970–Pro984 are Lumenal-facing. The helical transmembrane segment at Ser985–Arg1005 threads the bilayer. At Phe1006 to Tyr1022 the chain is on the cytoplasmic side.

This sequence belongs to the cation transport ATPase (P-type) (TC 3.A.3) family. Type IIC subfamily. The sodium/potassium-transporting ATPase is composed of a catalytic alpha subunit, an auxiliary non-catalytic beta subunit and an additional regulatory subunit.

The protein resides in the cell membrane. It carries out the reaction K(+)(out) + Na(+)(in) + ATP + H2O = K(+)(in) + Na(+)(out) + ADP + phosphate + H(+). In terms of biological role, this is the catalytic component of the active enzyme, which catalyzes the hydrolysis of ATP coupled with the exchange of sodium and potassium ions across the plasma membrane. This action creates the electrochemical gradient of sodium and potassium ions, providing the energy for active transport of various nutrients. This is Sodium/potassium-transporting ATPase subunit alpha from Tetronarce californica (Pacific electric ray).